The chain runs to 263 residues: Type III pantothenate kinase (263 aa).

6-13 (DVGNTRIK) is an ATP binding site. Substrate-binding positions include Tyr-92 and 99 to 102 (GTDR). Catalysis depends on Asp-101, which acts as the Proton acceptor. Thr-124 is a binding site for ATP. Substrate is bound at residue Thr-174.

This sequence belongs to the type III pantothenate kinase family. Homodimer. The cofactor is NH4(+). Requires K(+) as cofactor.

Its subcellular location is the cytoplasm. The catalysed reaction is (R)-pantothenate + ATP = (R)-4'-phosphopantothenate + ADP + H(+). The protein operates within cofactor biosynthesis; coenzyme A biosynthesis; CoA from (R)-pantothenate: step 1/5. Functionally, catalyzes the phosphorylation of pantothenate (Pan), the first step in CoA biosynthesis. This chain is Type III pantothenate kinase, found in Azoarcus sp. (strain BH72).